Here is a 454-residue protein sequence, read N- to C-terminus: Na(+)/H(+) antiporter NhaA (454 aa).

10 helical membrane-spanning segments follow: residues 22–42 (ISGL…NLPF), 64–84 (MGLG…TVGL), 106–126 (LCAV…ISLF), 150–170 (GWAV…ALFA), 190–210 (LLAI…YWFL), 228–248 (VPWL…FEAG), 284–304 (PFSA…VHFE), 306–326 (LTLA…LVVG), 355–375 (MFPA…IASL), and 386–406 (ARFG…ILLS).

The protein belongs to the NhaA Na(+)/H(+) (TC 2.A.33) antiporter family.

It localises to the cell membrane. It carries out the reaction Na(+)(in) + 2 H(+)(out) = Na(+)(out) + 2 H(+)(in). In terms of biological role, na(+)/H(+) antiporter that extrudes sodium in exchange for external protons. This chain is Na(+)/H(+) antiporter NhaA, found in Bifidobacterium adolescentis (strain ATCC 15703 / DSM 20083 / NCTC 11814 / E194a).